Here is a 608-residue protein sequence, read N- to C-terminus: Mitochondrial import receptor subunit TOM70 (608 aa).

A2 is subject to N-acetylalanine. Topologically, residues 2-38 (AASKPVEAAVVAAAVPSSGSGVGGGGTAGPGTGGLPR) are mitochondrial intermembrane. A helical membrane pass occupies residues 39–59 (WQLALAVGAPLLLGAGAIYLW). At 60 to 608 (SRQQRRREAR…KKYGLKPPTL (549 aa)) the chain is on the cytoplasmic side. Positions 67 to 107 (EARGRGDASGLKRNSERKTPEGRASPAPGSGHPEGPGAHLD) are disordered. R71 is modified (omega-N-methylarginine). Phosphoserine occurs at positions 91, 96, and 110. TPR repeat units lie at residues 114–147 (AQAAKNKGNKYFKAGKYEQAIQCYTEAISLCPTE) and 153–186 (STFYQNRAAAFEQLQKWKEVAQDCTKAVELNPKY). The residue at position 185 (K185) is an N6-acetyllysine. K275 is covalently cross-linked (Glycyl lysine isopeptide (Lys-Gly) (interchain with G-Cter in SUMO2)). TPR repeat units follow at residues 294–327 (ENSGYLKAKQYMEEENYDKIISECSKEIDAEGKY), 329–362 (AEALLLRATFYLLIGNANAAKPDLDKVISLKEAN), 367–400 (ANALIKRGSMYMQQQQPLLSTQDFNMAADIDPQN), 401–434 (ADVYHHRGQLKILLDQVEEAVADFDECIRLRPES), 440–475 (QKCFALYRQAYTGNNSSQIQAAMKGFEEVIKKFPRC), 476–509 (AEGYALYAQALTDQQQFGKADEMYDKCIDLEPDN), 511–544 (TTYVHKGLLQLQWKQDLDRGLELISKAIEIDNKC), and 545–578 (DFAYETMGTIEVQRGNMEKAIDMFNKAINLAKSE). At S434 the chain carries Phosphoserine.

Belongs to the Tom70 family. Forms part of the preprotein translocase complex of the outer mitochondrial membrane (TOM complex) which consists of at least 7 different proteins (TOMM5, TOMM6, TOMM7, TOMM20, TOMM22, TOMM40 and TOMM70). Interacts with CAPN8. Interacts with TRADD, TRAF6 and STING. Interacts with MAVS; the interaction is enhanced by Sendai virus infection. Interacts with HSPA8 and HSP90AA1; both interactions are required for preprotein mitochondrial import. The interaction with HSP90AA1 is direct and mediates the association of TOMM70 with IRF3 and TBK1. Upon mitochondrial depolarization, interacts with PINK1; the interaction is required for PINK1-TOM-TIM23 supercomplex formation which is critical for PINK1 stabilization at the outer mitochondrial membrane, kinase activation and downstream mitophagy. As to quaternary structure, (Microbial infection) Interacts (via C-terminus) with SARS coronaviru/SARS-CoV and SARS coronavirus-2/SARS-CoV-2 virus protein ORF9b. In terms of assembly, (Microbial infection) Interacts with parasite T.gondii RH strain MAF1b1; the interaction impairs TOMM70 import activity, enables the parasite to associate with the host mitochondria and facilitates the association of MAF1b1 with MIB complex component SAMM50, promoting the formation of SPOTs (structures positive for outer mitochondrial membrane (OMM)); the interaction is probably indirect.

Its subcellular location is the mitochondrion outer membrane. Its function is as follows. Acts as a receptor of the preprotein translocase complex of the outer mitochondrial membrane (TOM complex). Recognizes and mediates the translocation of mitochondrial preproteins from the cytosol into the mitochondria in a chaperone dependent manner. Mediates TBK1 and IRF3 activation induced by MAVS in response to Sendai virus infection and promotes host antiviral responses during virus infection. Upon Sendai virus infection, recruits HSP90AA1:IRF3:BAX in mitochondrion and the complex induces apoptosis. The sequence is that of Mitochondrial import receptor subunit TOM70 from Homo sapiens (Human).